We begin with the raw amino-acid sequence, 883 residues long: Envelope glycoprotein B (883 aa).

A signal peptide spans Met-1–Ser-31. At Gln-32–Pro-750 the chain is on the virion surface side. Intrachain disulfides connect Cys-77–Cys-535, Cys-94–Cys-491, Cys-167–Cys-229, Cys-321–Cys-369, and Cys-558–Cys-608. N-linked (GlcNAc...) asparagine; by host glycosylation is found at Asn-102 and Asn-121. Residues Thr-134 to Arg-140 are involved in fusion and/or binding to host membrane. N-linked (GlcNAc...) asparagine; by host glycosylation is present at Asn-211. The involved in fusion and/or binding to host membrane stretch occupies residues His-216 to Thr-223. Residues Asn-262 and Asn-360 are each glycosylated (N-linked (GlcNAc...) asparagine; by host). Positions Gln-428–Ile-457 are disordered. Asn-579, Asn-635, and Asn-649 each carry an N-linked (GlcNAc...) asparagine; by host glycan. Hydrophobic membrane proximal region stretches follow at residues Ile-694–Ser-748 and Ala-724–Ala-744. A helical transmembrane segment spans residues Phe-751–Phe-771. The Intravirion portion of the chain corresponds to Lys-772 to Glu-883. Positions Pro-791 to Asp-817 are disordered. The span at Asp-806–Asp-817 shows a compositional bias: acidic residues. The short motif at Tyr-868–Leu-871 is the Internalization motif element.

This sequence belongs to the herpesviridae glycoprotein B family. As to quaternary structure, homotrimer; disulfide-linked. Binds to heparan sulfate proteoglycans. Interacts with gH/gL heterodimer. Post-translationally, a proteolytic cleavage by host furin generates two subunits that remain linked by disulfide bonds.

Its subcellular location is the virion membrane. It is found in the host cell membrane. The protein localises to the host endosome membrane. The protein resides in the host Golgi apparatus membrane. Functionally, envelope glycoprotein that forms spikes at the surface of virion envelope. Essential for the initial attachment to heparan sulfate moieties of the host cell surface proteoglycans. Involved in fusion of viral and cellular membranes leading to virus entry into the host cell. Following initial binding to its host receptors, membrane fusion is mediated by the fusion machinery composed at least of gB and the heterodimer gH/gL. May be involved in the fusion between the virion envelope and the outer nuclear membrane during virion egress. This chain is Envelope glycoprotein B, found in Gallus gallus (Chicken).